Here is a 380-residue protein sequence, read N- to C-terminus: 8-amino-7-oxononanoate synthase (380 aa).

A substrate-binding site is contributed by Arg-26. 104-105 (GY) contacts pyridoxal 5'-phosphate. Residue His-129 coordinates substrate. Residues Ser-175, 200 to 203 (DEAH), and 232 to 235 (TLSK) each bind pyridoxal 5'-phosphate. Residue Lys-235 is modified to N6-(pyridoxal phosphate)lysine. Thr-345 is a binding site for substrate.

Belongs to the class-II pyridoxal-phosphate-dependent aminotransferase family. BioF subfamily. In terms of assembly, homodimer. Pyridoxal 5'-phosphate serves as cofactor.

It catalyses the reaction 6-carboxyhexanoyl-[ACP] + L-alanine + H(+) = (8S)-8-amino-7-oxononanoate + holo-[ACP] + CO2. It functions in the pathway cofactor biosynthesis; biotin biosynthesis. Its function is as follows. Catalyzes the decarboxylative condensation of pimeloyl-[acyl-carrier protein] and L-alanine to produce 8-amino-7-oxononanoate (AON), [acyl-carrier protein], and carbon dioxide. The polypeptide is 8-amino-7-oxononanoate synthase (Mycolicibacterium gilvum (strain PYR-GCK) (Mycobacterium gilvum (strain PYR-GCK))).